Consider the following 860-residue polypeptide: Ubiquitin fusion degradation protein 3 homolog (860 aa).

WD repeat units lie at residues 27-65 (AHKS…YTKT), 71-112 (PKGI…PYAI), 115-154 (EHKQ…SSSF), 163-203 (GHTL…SVFK), 204-242 (GHTD…ILRK), and 244-283 (ATQA…DGNL). One can recognise a PFU domain in the interval 397–497 (PIHYLEEITR…DKLSKGAASA (101 aa)). Residues 494-585 (AASAQSGYED…LPQNKKKPRG (92 aa)) are disordered. Residues 586 to 856 (PLVPVPDFYI…KNIARDIVEM (271 aa)) form the PUL domain.

This sequence belongs to the WD repeat PLAP family. In terms of assembly, interacts with cdc-48.1. In terms of tissue distribution, expressed in intestine (at protein level).

The protein resides in the cytoplasm. Its function is as follows. Plays a role in protein ubiquitination, sorting and degradation through its association with cdc-48.1 and/or cdc-48.2. The polypeptide is Ubiquitin fusion degradation protein 3 homolog (Caenorhabditis elegans).